The following is a 667-amino-acid chain: Probable potassium transport system protein Kup (667 aa).

Transmembrane regions (helical) follow at residues 16 to 36, 58 to 78, 101 to 121, 146 to 166, 167 to 187, 221 to 241, 253 to 273, 294 to 314, 343 to 363, 373 to 393, 399 to 419, and 424 to 444; these read GFIIALGIVYGDIGTSPLYTM, VSLIIWTLTLVTTIKYVLIAL, WLIIPAMLGGATLLSDGALTP, TNVILTTLLILMVLFGLQRFG, TGVIGKLFGPVMLVWFSVLGI, IFILGSIFLATTGAEALYSDL, WPFVKVCIILSYCGQAAWILA, VYLVILATLAAIIASQALISG, LYIPVINWSLFAVTSCTVLYF, YGLAITITMLMTTILLAYYLI, PLLASLLMAFFAFIEFIFFLA, and FMHGGYVVVVLALAIVFVMVI.

Belongs to the HAK/KUP transporter (TC 2.A.72) family.

It localises to the cell membrane. The catalysed reaction is K(+)(in) + H(+)(in) = K(+)(out) + H(+)(out). Functionally, transport of potassium into the cell. Likely operates as a K(+):H(+) symporter. This Streptococcus equi subsp. equi (strain 4047) protein is Probable potassium transport system protein Kup.